The chain runs to 88 residues: Large ribosomal subunit protein bL27 (88 aa).

The disordered stretch occupies residues 1-24 (MAHKKGTGSTRNGRDSNSKRLGVK).

Belongs to the bacterial ribosomal protein bL27 family.

This is Large ribosomal subunit protein bL27 from Prochlorococcus marinus (strain MIT 9303).